Here is a 207-residue protein sequence, read N- to C-terminus: Carbonic anhydrase 2 (207 aa).

Positions 51, 53, 104, and 107 each coordinate Zn(2+).

Belongs to the beta-class carbonic anhydrase family. Requires Zn(2+) as cofactor.

The enzyme catalyses hydrogencarbonate + H(+) = CO2 + H2O. In terms of biological role, catalyzes the reversible hydration of carbon dioxide to form bicarbonate. This Mycobacterium tuberculosis (strain CDC 1551 / Oshkosh) protein is Carbonic anhydrase 2 (mtcA2).